A 426-amino-acid polypeptide reads, in one-letter code: Serine--tRNA ligase (426 aa).

Residue 235–237 (TAE) coordinates L-serine. ATP is bound at residue 266–268 (RRE). L-serine is bound at residue E289. Position 353-356 (353-356 (EISS)) interacts with ATP. S389 is an L-serine binding site.

This sequence belongs to the class-II aminoacyl-tRNA synthetase family. Type-1 seryl-tRNA synthetase subfamily. In terms of assembly, homodimer. The tRNA molecule binds across the dimer.

The protein localises to the cytoplasm. The catalysed reaction is tRNA(Ser) + L-serine + ATP = L-seryl-tRNA(Ser) + AMP + diphosphate + H(+). It catalyses the reaction tRNA(Sec) + L-serine + ATP = L-seryl-tRNA(Sec) + AMP + diphosphate + H(+). Its pathway is aminoacyl-tRNA biosynthesis; selenocysteinyl-tRNA(Sec) biosynthesis; L-seryl-tRNA(Sec) from L-serine and tRNA(Sec): step 1/1. Its function is as follows. Catalyzes the attachment of serine to tRNA(Ser). Is also able to aminoacylate tRNA(Sec) with serine, to form the misacylated tRNA L-seryl-tRNA(Sec), which will be further converted into selenocysteinyl-tRNA(Sec). This is Serine--tRNA ligase from Nostoc punctiforme (strain ATCC 29133 / PCC 73102).